A 102-amino-acid chain; its full sequence is Amoebiasin-1 (102 aa).

Residues 27–32 (NPTTGY) carry the BC loop motif. A DE loop motif is present at residues 51 to 61 (DQHAPGICGCG). The FG loop signature appears at 85–93 (PWAPNANDR).

It belongs to the protease inhibitor I42 family. As to quaternary structure, monomer. During oxidative conditions, forms homooligomers; disulfide-linked. Interacts with cysteine protease CP2. Interacts with cysteine protease CP5. During oxidative conditions, cys-39, cys-58 and cys-60 react to form intra- and inter-molecular disulfide bonds resulting in the loss of the protein inhibitory activity.

The protein localises to the cytoplasm. In terms of biological role, cysteine protease inhibitor. Inhibits cysteine proteases CP1, CP2 and CP5. May protect the cytosol against cysteine proteases released by damaged intracellular vesicles. This is Amoebiasin-1 from Entamoeba histolytica (strain ATCC 30459 / HM-1:IMSS / ABRM).